Here is a 472-residue protein sequence, read N- to C-terminus: Lactate utilization protein B (472 aa).

2 consecutive 4Fe-4S ferredoxin-type domains span residues 304 to 334 (GTEF…GHSY) and 353 to 382 (YDDY…LHEL). [4Fe-4S] cluster-binding residues include Cys313, Cys316, Cys319, Cys323, Cys366, Cys369, and Cys373.

This sequence belongs to the LutB/YkgF family.

In terms of biological role, is involved in L-lactate degradation and allows cells to grow with lactate as the sole carbon source. Has probably a role as an electron transporter during oxidation of L-lactate. The sequence is that of Lactate utilization protein B from Anoxybacillus flavithermus (strain DSM 21510 / WK1).